The sequence spans 928 residues: Type II inositol 3,4-bisphosphate 4-phosphatase (928 aa).

Over residues 1–13 (MEIKEEGTSEEGQ) the composition is skewed to basic and acidic residues. Disordered regions lie at residues 1 to 23 (MEIK…QAND), 481 to 516 (ILRK…HHSD), and 548 to 575 (SRND…LTSH). Positions 23-165 (DPEDIQFTSI…LKSKEQLLSL (143 aa)) constitute a C2 domain. Composition is skewed to basic and acidic residues over residues 506-516 (RRQDSIPHHSD) and 548-563 (SRND…KDGD).

Belongs to the inositol 3,4-bisphosphate 4-phosphatase family.

The enzyme catalyses a 1,2-diacyl-sn-glycero-3-phospho-(1D-myo-inositol-3,4-bisphosphate) + H2O = a 1,2-diacyl-sn-glycero-3-phospho-(1D-myo-inositol-3-phosphate) + phosphate. It catalyses the reaction 1D-myo-inositol 3,4-bisphosphate + H2O = 1D-myo-inositol 3-phosphate + phosphate. It carries out the reaction 1D-myo-inositol 1,3,4-trisphosphate + H2O = 1D-myo-inositol 1,3-bisphosphate + phosphate. It participates in signal transduction; phosphatidylinositol signaling pathway. Its activity is regulated as follows. Strongly inhibited by inositol hexakisphosphate. Its function is as follows. Catalyzes the hydrolysis of the 4-position phosphate of phosphatidylinositol 3,4-bisphosphate, inositol 1,3,4-trisphosphate and inositol 3,4-bisphosphate. Plays a role in the late stages of macropinocytosis by dephosphorylating phosphatidylinositol 3,4-bisphosphate in membrane ruffles. The lipid phosphatase activity is critical for tumor suppressor function. Antagonizes the PI3K-AKT/PKB signaling pathway by dephosphorylating phosphoinositides and thereby modulating cell cycle progression and cell survival. This is Type II inositol 3,4-bisphosphate 4-phosphatase (Inpp4b) from Rattus norvegicus (Rat).